The chain runs to 199 residues: Pneumococcal vaccine antigen A homolog (199 aa).

It is found in the cell surface. The protein is Pneumococcal vaccine antigen A homolog (pvaA) of Streptococcus pyogenes serotype M6 (strain ATCC BAA-946 / MGAS10394).